Reading from the N-terminus, the 513-residue chain is ATP synthase subunit alpha (513 aa).

Gly169–Thr176 serves as a coordination point for ATP.

This sequence belongs to the ATPase alpha/beta chains family. F-type ATPases have 2 components, CF(1) - the catalytic core - and CF(0) - the membrane proton channel. CF(1) has five subunits: alpha(3), beta(3), gamma(1), delta(1), epsilon(1). CF(0) has three main subunits: a(1), b(2) and c(9-12). The alpha and beta chains form an alternating ring which encloses part of the gamma chain. CF(1) is attached to CF(0) by a central stalk formed by the gamma and epsilon chains, while a peripheral stalk is formed by the delta and b chains.

It is found in the cell inner membrane. The enzyme catalyses ATP + H2O + 4 H(+)(in) = ADP + phosphate + 5 H(+)(out). Its function is as follows. Produces ATP from ADP in the presence of a proton gradient across the membrane. The alpha chain is a regulatory subunit. This is ATP synthase subunit alpha from Actinobacillus pleuropneumoniae serotype 7 (strain AP76).